Reading from the N-terminus, the 245-residue chain is MNINVLTLFPEMFTPLQVSLLGRGQEDGKWKLNLVNFRDFSDRPHKSVDDTPYGGGAGMVLQVKPIKDALDSLENKGKVIITAPQGKTFNEQMAQEWSKEENLTFICGHFEGFDQRVYDLADEMVSIGDYVLTGGELPTMSMIDATVRLLPGILGNALSTVEESFSDGLLEYPQYTRPADFEGQKVPEVLLSGNHGKIDEWRHYQALKATKLHRPDLLEKRDLTPEEVRMLRQIREDEQAEEDKL.

Residues Gly-108 and 127-132 (IGDYVL) contribute to the S-adenosyl-L-methionine site.

Belongs to the RNA methyltransferase TrmD family. In terms of assembly, homodimer.

It localises to the cytoplasm. It carries out the reaction guanosine(37) in tRNA + S-adenosyl-L-methionine = N(1)-methylguanosine(37) in tRNA + S-adenosyl-L-homocysteine + H(+). Its function is as follows. Specifically methylates guanosine-37 in various tRNAs. This Lactobacillus delbrueckii subsp. bulgaricus (strain ATCC 11842 / DSM 20081 / BCRC 10696 / JCM 1002 / NBRC 13953 / NCIMB 11778 / NCTC 12712 / WDCM 00102 / Lb 14) protein is tRNA (guanine-N(1)-)-methyltransferase.